The sequence spans 724 residues: MEDREMSTKPESISSRPPEIPDNDWKISLYDPGDNDDCPRACFLPCDMFAHTRYRLDLIKQGRDPLDLTDYKDFNPTCWKFFGLCTGGFCIGSGIYTGRETTRIRQKYGIKGTAGDDMTRGIFCQPCSLIRNDLEIRQREGMKQEADLPPPRPLGEDYQPIFAIKPDGYKSEPRMTTPRGILKPIASPEISSPPDGQPALREVHFHEPGQGNAPNVAASYPAEGGHVSQSSFSPRTEGGPSTVNQRRSREGTLTPIEEADNQAGEERNKSTTLGPAMNTFQRTTSPPVMHVTTSDAPIQAPTPTRDHDRYGNGRGPDTDRLEVPVQSNTPARKSRFSEEFDAPSADEMFSKIPDAAPSSTLDAPPRLPQLPGAFDTPAMPPATVPAGSSDVPSQLPQLPGAFPSSSHSETPNMKPSALGQLTALRDVANQSPKVVTVEEAETSIAETIQDEADEAQVGDRPHDNSQDPQLDTLPPRDTRHRLNIDEQLAFLPPQAEAHDSGTNTVVPLPDQPEAHGPHMDAKVALAAARIKDHPIESDPRINSPKPISIRNHEFTEDKRLAVPRSDSPFKPGIHLDQRVPTPPALVRPHNRLEDRQTATPSPSADRENRNLAADVRTASPGLGSRRGGLMGGRPHSLRHDSRVGTPKHLENVHDLAADVRAPTGPVTPLAKSPEPRSPPPKRLAAASPALSASSISIGTRAHQLLEHFLEGNRKAAERENGNKS.

Disordered stretches follow at residues 1–23 (MEDR…IPDN), 166–477 (PDGY…PPRD), 496–517 (EAHD…AHGP), and 532–691 (DHPI…PALS). Composition is skewed to polar residues over residues 227-245 (VSQS…TVNQ) and 270-296 (STTL…TSDA). Basic and acidic residues predominate over residues 304 to 322 (TRDHDRYGNGRGPDTDRLE). Over residues 403 to 413 (PSSSHSETPNM) the composition is skewed to polar residues. 2 stretches are compositionally biased toward basic and acidic residues: residues 550 to 560 (RNHEFTEDKRL) and 637 to 657 (LRHD…DLAA). A compositionally biased stretch (low complexity) spans 682 to 691 (RLAAASPALS).

This is an uncharacterized protein from Neurospora crassa (strain ATCC 24698 / 74-OR23-1A / CBS 708.71 / DSM 1257 / FGSC 987).